A 331-amino-acid chain; its full sequence is Acyl-CoA desaturase 1 (331 aa).

At 1-46 (MTEVDDGCGGRLRGSVLLEDECDLKQECETPTHSLVQGRDPPVVVV) the chain is on the cytoplasmic side. The helical transmembrane segment at 47-67 (WRNVVLMSVLHTAAVYGLVLL) threads the bilayer. Position 49 (N49) interacts with substrate. At 68 to 71 (PSAS) the chain is on the lumenal side. Residues 72–90 (AYTLLAFCFVSSALGITAG) traverse the membrane as a helical segment. Topologically, residues 91–189 (AHRLWSHRSY…DRVVMFQRRF (99 aa)) are cytoplasmic. H92 and H97 together coordinate Fe cation. The Histidine box-1 signature appears at 92–97 (HRLWSH). Substrate-binding residues include N120, R127, and D128. Fe cation contacts are provided by H129, H132, and H133. Positions 129-133 (HRVHH) match the Histidine box-2 motif. Substrate is bound at residue K161. Residues 190 to 209 (YKHSVVVMCFLIPAMLPWFL) traverse the membrane as a helical segment. Over 210–213 (WAES) the chain is Lumenal. A helical membrane pass occupies residues 214 to 235 (LWVGYFVPVLLRYALVLNATWL). W234 contributes to the substrate binding site. Residues 236–331 (VNSAAHMWGN…RTGDGSHRSG (96 aa)) are Cytoplasmic-facing. Fe cation-binding residues include H241, H270, H273, and H274. The Histidine box-3 signature appears at 270–274 (HNYHH).

This sequence belongs to the fatty acid desaturase type 1 family. Fe(2+) serves as cofactor. Expression is highest in liver, followed by brain and intestine, and lowest in spleen. Also expressed in heart, gill and muscle.

The protein localises to the endoplasmic reticulum membrane. It carries out the reaction octadecanoyl-CoA + 2 Fe(II)-[cytochrome b5] + O2 + 2 H(+) = (9Z)-octadecenoyl-CoA + 2 Fe(III)-[cytochrome b5] + 2 H2O. Its function is as follows. Stearoyl-CoA desaturase that utilizes O(2) and electrons from reduced cytochrome b5 to introduce the first double bond into saturated fatty acyl-CoA substrates. Catalyzes the insertion of a cis double bond at the delta-9 position into fatty acyl-CoA substrates including palmitoyl-CoA and stearoyl-CoA. Contributes to the biosynthesis of membrane phospholipids, cholesterol esters and triglycerides. This chain is Acyl-CoA desaturase 1, found in Tachysurus fulvidraco (Yellow catfish).